A 161-amino-acid polypeptide reads, in one-letter code: Pro-corazonin (161 aa).

The signal sequence occupies residues 1–20 (MMRLLLLPLFLFTLSMACMG). Gln21 is modified (pyrrolidone carboxylic acid). Position 31 is an asparagine amide (Asn31). Positions 70-161 (LERCLAQLQR…SGEPSVFGKH (92 aa)) are excised as a propeptide. 2 disordered regions span residues 93-125 (NANR…TPIQ) and 142-161 (VAGS…FGKH). Residues 102–117 (SDSGSSRNRANNNNEN) show a composition bias toward low complexity.

Belongs to the corazonin family.

The protein localises to the secreted. Its function is as follows. Cardioactive peptide. Corazonin is probably involved in the physiological regulation of the heart beat. Clock (Clk) and cycle (cyc) proteins negatively regulate Crz transcription in a cell-specific manner. This Drosophila pseudoobscura pseudoobscura (Fruit fly) protein is Pro-corazonin.